The primary structure comprises 152 residues: Protein-export protein SecB (152 aa).

The protein belongs to the SecB family. Homotetramer, a dimer of dimers. One homotetramer interacts with 1 SecA dimer.

It localises to the cytoplasm. In terms of biological role, one of the proteins required for the normal export of preproteins out of the cell cytoplasm. It is a molecular chaperone that binds to a subset of precursor proteins, maintaining them in a translocation-competent state. It also specifically binds to its receptor SecA. The chain is Protein-export protein SecB from Dechloromonas aromatica (strain RCB).